Here is a 464-residue protein sequence, read N- to C-terminus: Protein ABHD18 (464 aa).

An N-terminal signal peptide occupies residues 1-24; that stretch reads MGVSKLDILYRRLLLTKLFIRGWG. An N-linked (GlcNAc...) asparagine glycan is attached at N341.

The protein belongs to the AB hydrolase superfamily.

The protein localises to the secreted. The polypeptide is Protein ABHD18 (Rattus norvegicus (Rat)).